The primary structure comprises 61 residues: Small ribosomal subunit protein uS14 (61 aa).

Residues Cys24, Cys27, Cys40, and Cys43 each contribute to the Zn(2+) site.

The protein belongs to the universal ribosomal protein uS14 family. Zinc-binding uS14 subfamily. Part of the 30S ribosomal subunit. Contacts proteins S3 and S10. Zn(2+) serves as cofactor.

In terms of biological role, binds 16S rRNA, required for the assembly of 30S particles and may also be responsible for determining the conformation of the 16S rRNA at the A site. The polypeptide is Small ribosomal subunit protein uS14 (Herpetosiphon aurantiacus (strain ATCC 23779 / DSM 785 / 114-95)).